A 397-amino-acid chain; its full sequence is DNA-directed RNA polymerase subunit Rpo1C (397 aa).

Belongs to the RNA polymerase beta' chain family. Part of the RNA polymerase complex. An artificial construct of the RNAP clamp domain (including part of this protein) contacts transcription elongation factors Spt4 and Spt5.

It is found in the cytoplasm. The catalysed reaction is RNA(n) + a ribonucleoside 5'-triphosphate = RNA(n+1) + diphosphate. In terms of biological role, DNA-dependent RNA polymerase (RNAP) catalyzes the transcription of DNA into RNA using the four ribonucleoside triphosphates as substrates. Forms part of the jaw domain. The protein is DNA-directed RNA polymerase subunit Rpo1C of Pyrococcus furiosus (strain ATCC 43587 / DSM 3638 / JCM 8422 / Vc1).